A 329-amino-acid chain; its full sequence is Quinone oxidoreductase (329 aa).

Ala-2 carries the post-translational modification N-acetylalanine. Lys-23 carries the N6-acetyllysine modification. Residues Tyr-53, 158 to 161 (SGGV), Gly-181, His-200, Asn-229, 246 to 249 (VGSR), and 269 to 271 (VTV) each bind NADP(+). Ser-248 bears the Phosphoserine mark. An N6-succinyllysine modification is found at Lys-296.

It belongs to the zinc-containing alcohol dehydrogenase family. Quinone oxidoreductase subfamily. Homotetramer.

The protein localises to the cytoplasm. The enzyme catalyses 2 a quinone + NADPH + H(+) = 2 a 1,4-benzosemiquinone + NADP(+). Functionally, does not have alcohol dehydrogenase activity. Binds NADP and acts through a one-electron transfer process. Orthoquinones, such as 1,2-naphthoquinone or 9,10-phenanthrenequinone, are the best substrates (in vitro). May act in the detoxification of xenobiotics. Interacts with (AU)-rich elements (ARE) in the 3'-UTR of target mRNA species and enhances their stability. NADPH binding interferes with mRNA binding. The sequence is that of Quinone oxidoreductase (CRYZ) from Pongo abelii (Sumatran orangutan).